We begin with the raw amino-acid sequence, 139 residues long: ATP synthase epsilon chain (139 aa).

It belongs to the ATPase epsilon chain family. In terms of assembly, F-type ATPases have 2 components, CF(1) - the catalytic core - and CF(0) - the membrane proton channel. CF(1) has five subunits: alpha(3), beta(3), gamma(1), delta(1), epsilon(1). CF(0) has three main subunits: a, b and c.

It is found in the cell inner membrane. Functionally, produces ATP from ADP in the presence of a proton gradient across the membrane. The protein is ATP synthase epsilon chain of Pseudomonas entomophila (strain L48).